Here is a 406-residue protein sequence, read N- to C-terminus: Protein IWS1 homolog 2 (406 aa).

Disordered regions lie at residues 1-28 (MQELDSSNDEWVKELEGENEESKFTGRR) and 41-89 (DEVE…SEEV). Over residues 10-24 (EWVKELEGENEESKF) the composition is skewed to basic and acidic residues. Residues 41 to 56 (DEVEEDLDDFTEPADD) are compositionally biased toward acidic residues. The span at 69 to 78 (KKDESGLEKT) shows a compositional bias: basic and acidic residues. The region spanning 201 to 284 (NLLKNWLEPL…NKWGRIIYNK (84 aa)) is the TFIIS N-terminal domain.

The protein belongs to the IWS1 family.

It is found in the nucleus. Functionally, transcription factor involved in RNA polymerase II (RNAPII) transcription regulation. Involved in transcription elongation. May function at post-recruitment and elongation steps of transcription. The protein is Protein IWS1 homolog 2 of Arabidopsis thaliana (Mouse-ear cress).